A 335-amino-acid chain; its full sequence is tRNA-splicing endonuclease (335 aa).

Catalysis depends on residues Tyr269, His280, and Lys311.

This sequence belongs to the tRNA-intron endonuclease family. Archaeal long subfamily. In terms of assembly, homodimer.

It catalyses the reaction pretRNA = a 3'-half-tRNA molecule with a 5'-OH end + a 5'-half-tRNA molecule with a 2',3'-cyclic phosphate end + an intron with a 2',3'-cyclic phosphate and a 5'-hydroxyl terminus.. In terms of biological role, endonuclease that removes tRNA introns. Cleaves pre-tRNA at the 5'- and 3'-splice sites to release the intron. The products are an intron and two tRNA half-molecules bearing 2',3' cyclic phosphate and 5'-OH termini. Recognizes a pseudosymmetric substrate in which 2 bulged loops of 3 bases are separated by a stem of 4 bp. The chain is tRNA-splicing endonuclease from Haloarcula marismortui (strain ATCC 43049 / DSM 3752 / JCM 8966 / VKM B-1809) (Halobacterium marismortui).